A 492-amino-acid chain; its full sequence is Bifunctional protein GlmU (492 aa).

The interval 1–238 is pyrophosphorylase; the sequence is MRDAAVVILA…AALVAGVNDR (238 aa). Residues 9 to 12, lysine 23, glutamine 80, and 85 to 86 contribute to the UDP-N-acetyl-alpha-D-glucosamine site; these read LAAG and GT. Aspartate 111 is a binding site for Mg(2+). The UDP-N-acetyl-alpha-D-glucosamine site is built by glycine 148, glutamate 163, asparagine 178, and asparagine 236. Asparagine 236 contacts Mg(2+). The segment at 239–259 is linker; it reads VQLADLAAVLNRRIVEGHQRA. Residues 260–492 are N-acetyltransferase; sequence GVTIIDPAST…EDQGPEATGE (233 aa). Residues arginine 341 and lysine 359 each contribute to the UDP-N-acetyl-alpha-D-glucosamine site. The active-site Proton acceptor is histidine 371. UDP-N-acetyl-alpha-D-glucosamine-binding residues include tyrosine 374 and asparagine 385. Acetyl-CoA is bound by residues alanine 388, 394–395, serine 413, and alanine 431; that span reads NY. The segment covering 469–483 has biased composition (low complexity); the sequence is EAAAAAGAGAGAAAE. A disordered region spans residues 469 to 492; that stretch reads EAAAAAGAGAGAAAEDQGPEATGE.

In the N-terminal section; belongs to the N-acetylglucosamine-1-phosphate uridyltransferase family. It in the C-terminal section; belongs to the transferase hexapeptide repeat family. In terms of assembly, homotrimer. Mg(2+) is required as a cofactor.

The protein resides in the cytoplasm. The enzyme catalyses alpha-D-glucosamine 1-phosphate + acetyl-CoA = N-acetyl-alpha-D-glucosamine 1-phosphate + CoA + H(+). The catalysed reaction is N-acetyl-alpha-D-glucosamine 1-phosphate + UTP + H(+) = UDP-N-acetyl-alpha-D-glucosamine + diphosphate. It participates in nucleotide-sugar biosynthesis; UDP-N-acetyl-alpha-D-glucosamine biosynthesis; N-acetyl-alpha-D-glucosamine 1-phosphate from alpha-D-glucosamine 6-phosphate (route II): step 2/2. It functions in the pathway nucleotide-sugar biosynthesis; UDP-N-acetyl-alpha-D-glucosamine biosynthesis; UDP-N-acetyl-alpha-D-glucosamine from N-acetyl-alpha-D-glucosamine 1-phosphate: step 1/1. Its pathway is bacterial outer membrane biogenesis; LPS lipid A biosynthesis. Its function is as follows. Catalyzes the last two sequential reactions in the de novo biosynthetic pathway for UDP-N-acetylglucosamine (UDP-GlcNAc). The C-terminal domain catalyzes the transfer of acetyl group from acetyl coenzyme A to glucosamine-1-phosphate (GlcN-1-P) to produce N-acetylglucosamine-1-phosphate (GlcNAc-1-P), which is converted into UDP-GlcNAc by the transfer of uridine 5-monophosphate (from uridine 5-triphosphate), a reaction catalyzed by the N-terminal domain. This chain is Bifunctional protein GlmU, found in Mycolicibacterium vanbaalenii (strain DSM 7251 / JCM 13017 / BCRC 16820 / KCTC 9966 / NRRL B-24157 / PYR-1) (Mycobacterium vanbaalenii).